The primary structure comprises 33 residues: Alpha-amanitin proprotein (33 aa).

Positions methionine 1–proline 10 are excised as a propeptide. A (3R,4R)-4,5-dihydroxyisoleucine; in form alpha-amanitin modification is found at isoleucine 11. Isoleucine 11 bears the (3R,4S)-4-hydroxyisoleucine; in form gamma-amanitin mark. A cross-link (cyclopeptide (Ile-Pro)) is located at residues isoleucine 11–proline 18. A cross-link (2'-cysteinyl-6'-hydroxytryptophan sulfoxide (Trp-Cys)) is located at residues tryptophan 12 to cysteine 16. Proline 18 is modified (4-hydroxyproline). Residues serine 19–alanine 33 constitute a propeptide that is removed on maturation.

Belongs to the MSDIN fungal toxin family. In terms of processing, processed by the macrocyclase-peptidase enzyme POPB to yield a toxic cyclic decapeptide. POPB first removes 10 residues from the N-terminus. Conformational trapping of the remaining peptide forces the enzyme to release this intermediate rather than proceed to macrocyclization. The enzyme rebinds the remaining peptide in a different conformation and catalyzes macrocyclization of the N-terminal 8 residues.

Functionally, major toxin belonging to the bicyclic octapeptides amatoxins that acts by binding non-competitively to RNA polymerase II and greatly slowing the elongation of transcripts from target promoters. This chain is Alpha-amanitin proprotein, found in Amanita rimosa.